The chain runs to 306 residues: tRNA dimethylallyltransferase 2 (306 aa).

Residue Gly-11–Thr-18 participates in ATP binding. Substrate is bound at residue Thr-13–Thr-18. The interval Asp-36–Gln-39 is interaction with substrate tRNA.

Belongs to the IPP transferase family. Monomer. Requires Mg(2+) as cofactor.

It catalyses the reaction adenosine(37) in tRNA + dimethylallyl diphosphate = N(6)-dimethylallyladenosine(37) in tRNA + diphosphate. In terms of biological role, catalyzes the transfer of a dimethylallyl group onto the adenine at position 37 in tRNAs that read codons beginning with uridine, leading to the formation of N6-(dimethylallyl)adenosine (i(6)A). In Bacteroides thetaiotaomicron (strain ATCC 29148 / DSM 2079 / JCM 5827 / CCUG 10774 / NCTC 10582 / VPI-5482 / E50), this protein is tRNA dimethylallyltransferase 2.